Consider the following 449-residue polypeptide: tRNA-2-methylthio-N(6)-dimethylallyladenosine synthase (449 aa).

Residues 3 to 124 enclose the MTTase N-terminal domain; the sequence is KMLYIKTYGC…LPTMLEKLDS (122 aa). 6 residues coordinate [4Fe-4S] cluster: C12, C48, C87, C163, C167, and C170. A Radical SAM core domain is found at 149-380; it reads KSPTVSGLVS…QAQLMLQQLE (232 aa). Residues 383–447 enclose the TRAM domain; that stretch reads QKLIGKVVPV…ASSLFGEVCP (65 aa).

The protein belongs to the methylthiotransferase family. MiaB subfamily. Monomer. [4Fe-4S] cluster serves as cofactor.

The protein resides in the cytoplasm. It carries out the reaction N(6)-dimethylallyladenosine(37) in tRNA + (sulfur carrier)-SH + AH2 + 2 S-adenosyl-L-methionine = 2-methylsulfanyl-N(6)-dimethylallyladenosine(37) in tRNA + (sulfur carrier)-H + 5'-deoxyadenosine + L-methionine + A + S-adenosyl-L-homocysteine + 2 H(+). In terms of biological role, catalyzes the methylthiolation of N6-(dimethylallyl)adenosine (i(6)A), leading to the formation of 2-methylthio-N6-(dimethylallyl)adenosine (ms(2)i(6)A) at position 37 in tRNAs that read codons beginning with uridine. This chain is tRNA-2-methylthio-N(6)-dimethylallyladenosine synthase, found in Orientia tsutsugamushi (strain Boryong) (Rickettsia tsutsugamushi).